Here is a 1213-residue protein sequence, read N- to C-terminus: DNA-directed RNA polymerase subunit beta (1213 aa).

Positions 1169–1213 are disordered; the sequence is SRMAEEQEKKKLAEETGKSGDKKENKKDADKPVAPADESDDKVSK. Basic and acidic residues predominate over residues 1171–1199; the sequence is MAEEQEKKKLAEETGKSGDKKENKKDADK.

It belongs to the RNA polymerase beta chain family. In terms of assembly, the RNAP catalytic core consists of 2 alpha, 1 beta, 1 beta' and 1 omega subunit. When a sigma factor is associated with the core the holoenzyme is formed, which can initiate transcription.

It catalyses the reaction RNA(n) + a ribonucleoside 5'-triphosphate = RNA(n+1) + diphosphate. In terms of biological role, DNA-dependent RNA polymerase catalyzes the transcription of DNA into RNA using the four ribonucleoside triphosphates as substrates. The chain is DNA-directed RNA polymerase subunit beta from Lactobacillus helveticus (strain DPC 4571).